We begin with the raw amino-acid sequence, 221 residues long: Protein-L-isoaspartate O-methyltransferase (221 aa).

Serine 57 is a catalytic residue.

The protein belongs to the methyltransferase superfamily. L-isoaspartyl/D-aspartyl protein methyltransferase family.

It localises to the cytoplasm. The catalysed reaction is [protein]-L-isoaspartate + S-adenosyl-L-methionine = [protein]-L-isoaspartate alpha-methyl ester + S-adenosyl-L-homocysteine. Its function is as follows. Catalyzes the methyl esterification of L-isoaspartyl residues in peptides and proteins that result from spontaneous decomposition of normal L-aspartyl and L-asparaginyl residues. It plays a role in the repair and/or degradation of damaged proteins. This is Protein-L-isoaspartate O-methyltransferase from Korarchaeum cryptofilum (strain OPF8).